Here is a 142-residue protein sequence, read N- to C-terminus: Photosystem II extrinsic protein U (142 aa).

The first 28 residues, 1 to 28 (MKKIGLLLTIFSLCLGCLGLVPSDKAHA), serve as a signal peptide directing secretion.

The protein belongs to the PsbU family. PSII is composed of 1 copy each of membrane proteins PsbA, PsbB, PsbC, PsbD, PsbE, PsbF, PsbH, PsbI, PsbJ, PsbK, PsbL, PsbM, PsbT, PsbX, PsbY, PsbZ, Psb30/Ycf12, peripheral proteins PsbO, CyanoQ (PsbQ), PsbU, PsbV and a large number of cofactors. It forms dimeric complexes.

It localises to the cellular thylakoid membrane. Its function is as follows. One of the extrinsic, lumenal subunits of photosystem II (PSII). PSII is a light-driven water plastoquinone oxidoreductase, using light energy to abstract electrons from H(2)O, generating a proton gradient subsequently used for ATP formation. The extrinsic proteins stabilize the structure of photosystem II oxygen-evolving complex (OEC), the ion environment of oxygen evolution and protect the OEC against heat-induced inactivation. This chain is Photosystem II extrinsic protein U, found in Trichodesmium erythraeum (strain IMS101).